The following is a 673-amino-acid chain: UvrABC system protein B (673 aa).

The Helicase ATP-binding domain occupies 26 to 183 (EGLEDGLAHQ…RRLAELQYTR (158 aa)). An ATP-binding site is contributed by 39–46 (GVTGSGKT). The Beta-hairpin motif lies at 92-115 (YYDYYQPEAYVPSSDTFIEKDASV). One can recognise a Helicase C-terminal domain in the interval 431 to 597 (QVDDLLSEIR…GLNKKVVDIL (167 aa)). Positions 633–668 (QQKIHELEGQMMQHAQNLEFEEAAQIRDQLHQLREL) constitute a UVR domain.

The protein belongs to the UvrB family. As to quaternary structure, forms a heterotetramer with UvrA during the search for lesions. Interacts with UvrC in an incision complex.

It localises to the cytoplasm. Functionally, the UvrABC repair system catalyzes the recognition and processing of DNA lesions. A damage recognition complex composed of 2 UvrA and 2 UvrB subunits scans DNA for abnormalities. Upon binding of the UvrA(2)B(2) complex to a putative damaged site, the DNA wraps around one UvrB monomer. DNA wrap is dependent on ATP binding by UvrB and probably causes local melting of the DNA helix, facilitating insertion of UvrB beta-hairpin between the DNA strands. Then UvrB probes one DNA strand for the presence of a lesion. If a lesion is found the UvrA subunits dissociate and the UvrB-DNA preincision complex is formed. This complex is subsequently bound by UvrC and the second UvrB is released. If no lesion is found, the DNA wraps around the other UvrB subunit that will check the other stand for damage. This chain is UvrABC system protein B, found in Klebsiella pneumoniae (strain 342).